A 60-amino-acid chain; its full sequence is MLILTRKVGESLLIGDDISITILNIRGNQVKIGVEAPKEVSVHREEIYHRIRDVKDEQQL.

It belongs to the CsrA/RsmA family. Homodimer; the beta-strands of each monomer intercalate to form a hydrophobic core, while the alpha-helices form wings that extend away from the core.

It localises to the cytoplasm. Its function is as follows. A key translational regulator that binds mRNA to regulate translation initiation and/or mRNA stability. Mediates global changes in gene expression, shifting from rapid growth to stress survival by linking envelope stress, the stringent response and the catabolite repression systems. Usually binds in the 5'-UTR; binding at or near the Shine-Dalgarno sequence prevents ribosome-binding, repressing translation, binding elsewhere in the 5'-UTR can activate translation and/or stabilize the mRNA. Its function is antagonized by small RNA(s). The protein is Translational regulator CsrA of Histophilus somni (strain 2336) (Haemophilus somnus).